The sequence spans 326 residues: Type II secretion system protein K (326 aa).

A propeptide spans 1–7 (MNHRQRG) (leader sequence). A helical membrane pass occupies residues 8–28 (IALLMVLLILALMMVLASAMT). Residues 29–326 (ERSARMYQQT…RYGIYWVADE (298 aa)) are Periplasmic-facing.

It belongs to the GSP K family. As to quaternary structure, type II secretion is composed of four main components: the outer membrane complex, the inner membrane complex, the cytoplasmic secretion ATPase and the periplasm-spanning pseudopilus. Interacts with core component PulG. Post-translationally, cleaved by prepilin peptidase.

Its subcellular location is the cell inner membrane. Component of the type II secretion system required for the energy-dependent secretion of extracellular factors such as proteases and toxins from the periplasm. Plays a role in pseudopilus assembly and seems to control its length. Interacts with the pseudopilus tip complex that is critical for the recognition and binding of secretion substrates. In Klebsiella pneumoniae, this protein is Type II secretion system protein K (pulK).